A 333-amino-acid chain; its full sequence is Foldase protein PrsA (333 aa).

A signal peptide spans 1 to 22 (MKSAKQIATALLVGMFTFSAVG). Cys-23 carries the N-palmitoyl cysteine lipid modification. Cys-23 carries S-diacylglycerol cysteine lipidation. Positions 192–283 (PNTVHLAHIL…FGWHVIKCIK (92 aa)) constitute a PpiC domain.

The protein belongs to the PrsA family.

It localises to the cell membrane. It carries out the reaction [protein]-peptidylproline (omega=180) = [protein]-peptidylproline (omega=0). Functionally, plays a major role in protein secretion by helping the post-translocational extracellular folding of several secreted proteins. The chain is Foldase protein PrsA from Clostridium acetobutylicum (strain ATCC 824 / DSM 792 / JCM 1419 / IAM 19013 / LMG 5710 / NBRC 13948 / NRRL B-527 / VKM B-1787 / 2291 / W).